The chain runs to 290 residues: tRNA (guanine-N(7)-)-methyltransferase (290 aa).

Basic and acidic residues-rich tracts occupy residues 1 to 12 and 20 to 43; these read MSDSLHTPEEPR and AHAH…DGPK. Positions 1–49 are disordered; that stretch reads MSDSLHTPEEPRPGPGEQLAHAHDGSLRHTRAKGEPRFPDGPKADPAGS. The S-adenosyl-L-methionine site is built by E104, D129, D156, and D179. D179 is a catalytic residue. Residues K183, D215, and 252–255 each bind substrate; that span reads TRFE.

The protein belongs to the class I-like SAM-binding methyltransferase superfamily. TrmB family.

It catalyses the reaction guanosine(46) in tRNA + S-adenosyl-L-methionine = N(7)-methylguanosine(46) in tRNA + S-adenosyl-L-homocysteine. The protein operates within tRNA modification; N(7)-methylguanine-tRNA biosynthesis. Functionally, catalyzes the formation of N(7)-methylguanine at position 46 (m7G46) in tRNA. In Streptomyces avermitilis (strain ATCC 31267 / DSM 46492 / JCM 5070 / NBRC 14893 / NCIMB 12804 / NRRL 8165 / MA-4680), this protein is tRNA (guanine-N(7)-)-methyltransferase.